We begin with the raw amino-acid sequence, 989 residues long: MNKVYNTVWNESTGTWVVTSELTRKGGLRPRQIKRTVLAGLIAGLLMPSMPALAAAYDNQTIGRGETSKSMHLSAGDTAKNTTINSGGKQYVSSGGSATSTTINIGGVQHVSSGGSATSSTINSGGHQHVSSGGSATNTTVNNGGRQTVFSGGSAMGTIINSGGDQYVISGGSATSASVTSGARQFVSSGGIVKATSVNSGGRQYVRDGGSATDTVLNNTGRQFVSSGGSAAKTTINSGGGMYLYGGSATGTSIYNGGRQYVSSGGSATNTTVYSGGRQHVYIDGNVTETTITSGGMLQVEAGGSASKVIQNSGGAVITNTSAAVSGTNDNGSFSIAGGSAVNMLLENGGYLTVFDGHQASDTMVGSDGTLDVRSGGVLYGTTTLTDKGALVGDVVTNEGNLYYLNNSTATFTGTLTGTGTLTQEGGNTRFSGLLSQDGGIFLQSGGAMTMDALQAKANVTTQSGTTLTLDNGTILTGNVAGDSTGAGDMAVKGASVWHLDGDSTVGALTLDNGTVDFRPSTTTRMTPAFQAVSLALGSLSGSGTFQMNTDIASHTGDMLNVAGNASGNFVLDIKNTGLEPVSAGAPLQVVQTGGGDAAFTLKGGKVDAGTWEYGLSKENTNWYLKADTPPPVTPPTNPDADNPDAGNPDAGNPDAGNPDAGNPDAGKPGTGKPDAGTSSSPVRRTTKSVDAVLGMATAPAYVFNSELDNLRFRHGDVMQNTRAPGGVWGRYTGSDNRISGGASSGYTLTQNGFETGADMVFDLSDSSLAVGTFFSYSDNSIKHARGGKSNVDSSGGGLYATWFDNDGYYVDGVLKYNRFNNELRTWMSDGTAVKGDYSQNGFGGSLEAGRTFSLNENAWAQPYVRTTAFRADKKEIRLNNGMKASIGATKSLQAEAGLKLGMTLDVAGKEVKPYLSAAVSHEFSDNNKVRINDTYDFRNDISGTTGKYGLGVNAQLTPNAGVWAEARYENGKQTESPITGGVGFRINF.

The first 54 residues, M1–A54, serve as a signal peptide directing secretion. 14 O-alpha-linked (D-glycero-D-manno-heptose) serine glycosylation sites follow: S74, S86, S93, S94, S97, S100, S112, S113, S116, S119, S124, S131, S132, and S135. 12 consecutive repeat copies span residues T82 to S100, T101 to S119, S120 to N138, T139 to G157, T158 to S176, A177 to A195, T196 to D214, T215 to K233, T234 to G251, T252 to N270, T271 to E289, and T290 to K308. The segment at T82–K308 is 12 X 19 AA approximate repeats. A compositionally biased stretch (polar residues) spans H110 to N123. The interval H110–R146 is disordered. The segment covering S124–S135 has biased composition (low complexity). Positions A136 to R146 are enriched in polar residues. 21 O-alpha-linked (D-glycero-D-manno-heptose) serine glycosylation sites follow: S151, S154, S162, S170, S176, S181, S188, S189, S200, S226, S227, S230, S238, S248, S263, S264, S275, S294, S305, S313, and S322. The disordered stretch occupies residues W623 to T686. Residues T629 to N638 show a composition bias toward pro residues. A run of 8 repeats spans residues P639–N643, P644–N648, P649–N653, P654–N658, P659–N663, P664–K668, P669–K673, and P674–T678. Over residues P639 to G667 the composition is skewed to low complexity. The 8 X 5 AA repeats of P-[DG]-[AGT]-[DGA]-[NKT] stretch occupies residues P639–T678. Residues N721–F989 form the Autotransporter domain.

As to quaternary structure, homohexamer. Post-translationally, glycosylated by TibC. Glycosylation is required for adhesion to and invasion of host cells. Glycosylation is dispensable for bacterial autoaggregation and biofilm formation.

The protein localises to the cell outer membrane. Functionally, mediates both adhesion to and invasion of human intestine epithelial cells. Also mediates bacterial cell aggregation via intercellular TibA-TibA interaction. Enhances biofilm formation. The polypeptide is Autotransporter adhesin/invasin TibA (Escherichia coli O78:H11 (strain H10407 / ETEC)).